A 153-amino-acid polypeptide reads, in one-letter code: 3-hydroxyacyl-[acyl-carrier-protein] dehydratase FabZ (153 aa).

Histidine 54 is a catalytic residue.

This sequence belongs to the thioester dehydratase family. FabZ subfamily.

It is found in the cytoplasm. It catalyses the reaction a (3R)-hydroxyacyl-[ACP] = a (2E)-enoyl-[ACP] + H2O. Involved in unsaturated fatty acids biosynthesis. Catalyzes the dehydration of short chain beta-hydroxyacyl-ACPs and long chain saturated and unsaturated beta-hydroxyacyl-ACPs. The chain is 3-hydroxyacyl-[acyl-carrier-protein] dehydratase FabZ from Chlamydia pneumoniae (Chlamydophila pneumoniae).